The chain runs to 246 residues: Pyridoxine 5'-phosphate synthase (246 aa).

Asn-12 lines the 3-amino-2-oxopropyl phosphate pocket. 14–15 contacts 1-deoxy-D-xylulose 5-phosphate; the sequence is DH. Residue Arg-23 coordinates 3-amino-2-oxopropyl phosphate. The active-site Proton acceptor is the His-48. Arg-50 and His-55 together coordinate 1-deoxy-D-xylulose 5-phosphate. The Proton acceptor role is filled by Glu-75. Residue Thr-105 coordinates 1-deoxy-D-xylulose 5-phosphate. His-196 functions as the Proton donor in the catalytic mechanism. 3-amino-2-oxopropyl phosphate contacts are provided by residues Gly-197 and 218–219; that span reads GH.

This sequence belongs to the PNP synthase family. Homooctamer; tetramer of dimers.

The protein resides in the cytoplasm. The enzyme catalyses 3-amino-2-oxopropyl phosphate + 1-deoxy-D-xylulose 5-phosphate = pyridoxine 5'-phosphate + phosphate + 2 H2O + H(+). The protein operates within cofactor biosynthesis; pyridoxine 5'-phosphate biosynthesis; pyridoxine 5'-phosphate from D-erythrose 4-phosphate: step 5/5. Catalyzes the complicated ring closure reaction between the two acyclic compounds 1-deoxy-D-xylulose-5-phosphate (DXP) and 3-amino-2-oxopropyl phosphate (1-amino-acetone-3-phosphate or AAP) to form pyridoxine 5'-phosphate (PNP) and inorganic phosphate. This chain is Pyridoxine 5'-phosphate synthase, found in Nitrosococcus oceani (strain ATCC 19707 / BCRC 17464 / JCM 30415 / NCIMB 11848 / C-107).